Here is a 356-residue protein sequence, read N- to C-terminus: Transcription elongation factor, mitochondrial (356 aa).

The transit peptide at 1 to 35 directs the protein to the mitochondrion; sequence MTVPSLLLAGGRWRCFPLPLASSLFQALHNSCCRK.

Belongs to the TEFM family. In terms of assembly, interacts with POLRMT.

The protein localises to the mitochondrion matrix. Its subcellular location is the mitochondrion nucleoid. Its function is as follows. Transcription elongation factor which increases mitochondrial RNA polymerase processivity. Regulates transcription of the mitochondrial genome, including genes important for the oxidative phosphorylation machinery. The polypeptide is Transcription elongation factor, mitochondrial (TEFM) (Bos taurus (Bovine)).